The sequence spans 346 residues: Holliday junction branch migration complex subunit RuvB (346 aa).

The segment at 4 to 184 is large ATPase domain (RuvB-L); it reads TDRLIAPTAK…FGIVQRLEFY (181 aa). ATP contacts are provided by residues arginine 24, glycine 65, lysine 68, threonine 69, threonine 70, 131-133, arginine 174, tyrosine 184, and arginine 221; that span reads EDF. Residue threonine 69 coordinates Mg(2+). Residues 185-255 form a small ATPAse domain (RuvB-S) region; that stretch reads NVKDLTHIVA…LADKALNMLN (71 aa). The segment at 258-346 is head domain (RuvB-H); sequence ERGFDHMDRR…QESQGGEGIA (89 aa). Residues arginine 294, arginine 313, and arginine 318 each coordinate DNA.

Belongs to the RuvB family. Homohexamer. Forms an RuvA(8)-RuvB(12)-Holliday junction (HJ) complex. HJ DNA is sandwiched between 2 RuvA tetramers; dsDNA enters through RuvA and exits via RuvB. An RuvB hexamer assembles on each DNA strand where it exits the tetramer. Each RuvB hexamer is contacted by two RuvA subunits (via domain III) on 2 adjacent RuvB subunits; this complex drives branch migration. In the full resolvosome a probable DNA-RuvA(4)-RuvB(12)-RuvC(2) complex forms which resolves the HJ.

It is found in the cytoplasm. The catalysed reaction is ATP + H2O = ADP + phosphate + H(+). Its function is as follows. The RuvA-RuvB-RuvC complex processes Holliday junction (HJ) DNA during genetic recombination and DNA repair, while the RuvA-RuvB complex plays an important role in the rescue of blocked DNA replication forks via replication fork reversal (RFR). RuvA specifically binds to HJ cruciform DNA, conferring on it an open structure. The RuvB hexamer acts as an ATP-dependent pump, pulling dsDNA into and through the RuvAB complex. RuvB forms 2 homohexamers on either side of HJ DNA bound by 1 or 2 RuvA tetramers; 4 subunits per hexamer contact DNA at a time. Coordinated motions by a converter formed by DNA-disengaged RuvB subunits stimulates ATP hydrolysis and nucleotide exchange. Immobilization of the converter enables RuvB to convert the ATP-contained energy into a lever motion, pulling 2 nucleotides of DNA out of the RuvA tetramer per ATP hydrolyzed, thus driving DNA branch migration. The RuvB motors rotate together with the DNA substrate, which together with the progressing nucleotide cycle form the mechanistic basis for DNA recombination by continuous HJ branch migration. Branch migration allows RuvC to scan DNA until it finds its consensus sequence, where it cleaves and resolves cruciform DNA. The chain is Holliday junction branch migration complex subunit RuvB from Cellvibrio japonicus (strain Ueda107) (Pseudomonas fluorescens subsp. cellulosa).